The sequence spans 144 residues: Probable low molecular weight protein-tyrosine-phosphatase AmsI (144 aa).

Catalysis depends on cysteine 9, which acts as the Nucleophile. Arginine 15 is an active-site residue. The Proton donor role is filled by aspartate 115.

This sequence belongs to the low molecular weight phosphotyrosine protein phosphatase family.

It carries out the reaction O-phospho-L-tyrosyl-[protein] + H2O = L-tyrosyl-[protein] + phosphate. May function as a phosphatase required for amylovoran (an exopolysaccharide that functions as a virulence factor) production. This Erwinia amylovora (Fire blight bacteria) protein is Probable low molecular weight protein-tyrosine-phosphatase AmsI (amsI).